The following is a 365-amino-acid chain: Ferrochelatase (365 aa).

Residues His-211 and Glu-292 each contribute to the Fe cation site.

The protein belongs to the ferrochelatase family.

It localises to the cytoplasm. It catalyses the reaction heme b + 2 H(+) = protoporphyrin IX + Fe(2+). It participates in porphyrin-containing compound metabolism; protoheme biosynthesis; protoheme from protoporphyrin-IX: step 1/1. Catalyzes the ferrous insertion into protoporphyrin IX. This is Ferrochelatase from Aromatoleum aromaticum (strain DSM 19018 / LMG 30748 / EbN1) (Azoarcus sp. (strain EbN1)).